A 278-amino-acid chain; its full sequence is Neuronal membrane glycoprotein M6-a (278 aa).

N-acetylmethionine is present on Met-1. At Met-1 to Leu-22 the chain is on the cytoplasmic side. The helical transmembrane segment at Gly-23 to Phe-43 threads the bilayer. At Cys-44–Val-84 the chain is on the extracellular side. A helical transmembrane segment spans residues Ile-85–Phe-105. At Thr-106–Ser-127 the chain is on the cytoplasmic side. The chain crosses the membrane as a helical span at residues Ala-128–Thr-148. At Ser-149–Leu-213 the chain is on the extracellular side. Asn-164 carries an N-linked (GlcNAc...) asparagine glycan. A disulfide bond links Cys-174 and Cys-192. An N-linked (GlcNAc...) asparagine glycan is attached at Asn-208. A helical transmembrane segment spans residues Phe-214 to Val-234. At Leu-235 to Thr-278 the chain is on the cytoplasmic side. Ser-256 is modified (phosphoserine). Position 278 is a phosphothreonine (Thr-278).

Belongs to the myelin proteolipid protein family. Interacts with OPRM1. Interacts with palmitoyltransferase ZDHHC17/HIP14; the interaction leads to palmitoylation of GPM6A. Post-translationally, N-glycosylated. In terms of processing, palmitoylated by ZDHHC17/HIP14.

It is found in the cell membrane. The protein localises to the cell projection. It localises to the axon. Its subcellular location is the growth cone. The protein resides in the dendritic spine. It is found in the filopodium. The protein localises to the neuron projection. Functionally, involved in neuronal differentiation, including differentiation and migration of neuronal stem cells. Plays a role in neuronal plasticity and is involved in neurite and filopodia outgrowth, filopodia motility and probably synapse formation. GPM6A-induced filopodia formation involves mitogen-activated protein kinase (MAPK) and Src signaling pathways. May be involved in neuronal NGF-dependent Ca(2+) influx. May be involved in regulation of endocytosis and intracellular trafficking of G-protein-coupled receptors (GPCRs); may enhance internalization and recycling of mu-type opioid receptor. The chain is Neuronal membrane glycoprotein M6-a (GPM6A) from Bos taurus (Bovine).